A 435-amino-acid chain; its full sequence is Arginine/serine-rich coiled-coil protein 2 (435 aa).

Positions 1 to 27 (MAASDTERDGLAPEKTSPDTDKKKEQS) are enriched in basic and acidic residues. The interval 1–230 (MAASDTERDG…PSPPPFRGRN (230 aa)) is disordered. Position 2 is an N-acetylalanine (A2). S4 is subject to Phosphoserine. Phosphothreonine occurs at positions 6 and 16. Phosphoserine occurs at positions 17, 30, and 32. The span at 35–51 (ASKHHYSRSRSRSRERK) shows a compositional bias: basic residues. Basic and acidic residues predominate over residues 66 to 111 (RSKEARRHESKDKSSKKHKSEEHNDKEHSSDKGRERLNSSENGEDR). Phosphoserine is present on S104. Basic residues predominate over residues 112–214 (HKRKERKSSR…KRIEKPRRFS (103 aa)). Positions 230-272 (NTAMDAQEALARRLERAKKLQEQREKEMVEKQKQQEIAAAAAA) form a coiled coil. K376 is covalently cross-linked (Glycyl lysine isopeptide (Lys-Gly) (interchain with G-Cter in SUMO1); alternate). K376 is covalently cross-linked (Glycyl lysine isopeptide (Lys-Gly) (interchain with G-Cter in SUMO2); alternate). S377 carries the post-translational modification Phosphoserine.

It belongs to the RSRC2 family.

In Bos taurus (Bovine), this protein is Arginine/serine-rich coiled-coil protein 2 (RSRC2).